A 276-amino-acid chain; its full sequence is NADPH-dependent 7-cyano-7-deazaguanine reductase (276 aa).

A substrate-binding site is contributed by I83 to S85. Residue S85–K86 participates in NADPH binding. C184 serves as the catalytic Thioimide intermediate. D191 acts as the Proton donor in catalysis. Residue H223–E224 participates in substrate binding. R252–G253 is an NADPH binding site.

Belongs to the GTP cyclohydrolase I family. QueF type 2 subfamily. Homodimer.

Its subcellular location is the cytoplasm. The catalysed reaction is 7-aminomethyl-7-carbaguanine + 2 NADP(+) = 7-cyano-7-deazaguanine + 2 NADPH + 3 H(+). It participates in tRNA modification; tRNA-queuosine biosynthesis. In terms of biological role, catalyzes the NADPH-dependent reduction of 7-cyano-7-deazaguanine (preQ0) to 7-aminomethyl-7-deazaguanine (preQ1). The polypeptide is NADPH-dependent 7-cyano-7-deazaguanine reductase (Ectopseudomonas mendocina (strain ymp) (Pseudomonas mendocina)).